The sequence spans 489 residues: CUGBP Elav-like family member 1-B (489 aa).

3 consecutive RRM domains span residues 16 to 99, 108 to 188, and 404 to 482; these read IKMF…PADS, RKLF…FADT, and ANLF…LKRS.

It belongs to the CELF/BRUNOL family. Oligomer. Oligomerization is required for RNA-binding and EDEN-dependent deadenylation. Post-translationally, phosphorylated during oocyte maturation and dephosphorylated following egg activation. Dephosphorylation is calcium dependent and correlates with the increase in the activity of EDEN-dependent deadenylation.

The protein resides in the nucleus. The protein localises to the cytoplasm. RNA-binding protein implicated in the regulation of several post-transcriptional events. May be involved in pre-mRNA alternative splicing, mRNA translation activation and stability. Mediates the rapid and sequence-specific cytoplasmic deadenylation of EDEN-containing maternal mRNAs following fertilization. Binds to AU-rich sequences (AREs) of jun mRNA. Binds to the embryonic deadenylation element (EDEN) motif localized in the 3'-UTR of maternal mRNAs. Binds to RNA containing several repeats of the consensus sequence 5'-UGU-3'. EDEN-dependent deadenylation is enhanced by the presence of an additional cis element composed of three AUU repeats. In Xenopus laevis (African clawed frog), this protein is CUGBP Elav-like family member 1-B (cugbp1-b).